A 376-amino-acid polypeptide reads, in one-letter code: Cytochrome b (376 aa).

Helical transmembrane passes span 28–48 (YGFL…FLAS), 72–94 (WCFR…LHIL), 107–127 (SWIS…IGYV), and 169–189 (FFVL…IHIF). Residues His78 and His92 each coordinate heme b. Heme b contacts are provided by His173 and His187. Position 192 (His192) interacts with a ubiquinone. The next 4 membrane-spanning stretches (helical) occupy residues 214-234 (LLSL…IQSI), 274-294 (IPSK…LFLL), 317-337 (VPII…CQLP), and 340-360 (IFIL…LFAL).

This sequence belongs to the cytochrome b family. As to quaternary structure, the main subunits of complex b-c1 are: cytochrome b, cytochrome c1 and the Rieske protein. Heme b serves as cofactor.

It localises to the mitochondrion inner membrane. Functionally, component of the ubiquinol-cytochrome c reductase complex (complex III or cytochrome b-c1 complex) that is part of the mitochondrial respiratory chain. The b-c1 complex mediates electron transfer from ubiquinol to cytochrome c. Contributes to the generation of a proton gradient across the mitochondrial membrane that is then used for ATP synthesis. This chain is Cytochrome b (MT-CYB), found in Plasmodium chabaudi.